The following is a 427-amino-acid chain: Phosphatidylinositol 4-phosphate 5-kinase 10 (427 aa).

The 419-residue stretch at 1 to 419 (MFTREITAKD…RFQDFVSQIF (419 aa)) folds into the PIPK domain. 2 disordered regions span residues 247-287 (SRGS…DSEN) and 334-355 (MKIP…VGKQ). Residues 379–400 (YGVRKRLEHCYKSIQHSSKTIS) form an activation loop region.

The catalysed reaction is a 1,2-diacyl-sn-glycero-3-phospho-(1D-myo-inositol 4-phosphate) + ATP = a 1,2-diacyl-sn-glycero-3-phospho-(1D-myo-inositol-4,5-bisphosphate) + ADP + H(+). The chain is Phosphatidylinositol 4-phosphate 5-kinase 10 (PIP5K10) from Arabidopsis thaliana (Mouse-ear cress).